The following is a 349-amino-acid chain: uncharacterized protein (349 aa).

The next 10 membrane-spanning stretches (helical) occupy residues 15–35 (VHSPIYLALAVVIFSAANPVT), 53–73 (ISFCNVLFVGNLCALGLMILI), 91–111 (WFLLTVTAILSRAIAPGLMFS), 120–140 (NVVLIGRLEPVFTLILSILLL), 147–167 (LSMVATLISFVGVAVTVFWGV), 179–199 (FGLGESFVAIAAFISAITTIL), 218–238 (LLGTFVFFWIAVIIYGFDHFM), 248–268 (WMLIYGAIIVVVGQVAWLAGL), 276–296 (INLASLVTPILAIIFAYLILL), and 302–322 (AQYLGGILLLLGAILSFIDNL). EamA domains lie at 39-164 (IELG…VTVF) and 191-319 (FISA…LSFI).

Belongs to the EamA transporter family.

Its subcellular location is the cell membrane. This is an uncharacterized protein from Synechocystis sp. (strain ATCC 27184 / PCC 6803 / Kazusa).